A 98-amino-acid polypeptide reads, in one-letter code: Integration host factor subunit alpha (98 aa).

The interval 49–70 (FGNFDLRDKNQRPGRNPKTGED) is disordered.

The protein belongs to the bacterial histone-like protein family. As to quaternary structure, heterodimer of an alpha and a beta chain.

This protein is one of the two subunits of integration host factor, a specific DNA-binding protein that functions in genetic recombination as well as in transcriptional and translational control. In Shewanella baltica (strain OS223), this protein is Integration host factor subunit alpha.